A 572-amino-acid polypeptide reads, in one-letter code: Triacylglycerol lipase OBL1 (572 aa).

The helical transmembrane segment at 110 to 130 threads the bilayer; that stretch reads GYLVEFFLNLFSLNGNFLGLL. Residues 320–356 form a disordered region; that stretch reads IPPSESSKSSTSFSDSDAHTGSDLSSDSERPTDTRKK. Low complexity predominate over residues 323-334; that stretch reads SESSKSSTSFSD. A compositionally biased stretch (basic and acidic residues) spans 346 to 356; it reads DSERPTDTRKK. The GXSXG motif lies at 391 to 395; the sequence is GHSLG. S393 (nucleophile) is an active-site residue. Catalysis depends on charge relay system residues D457 and H550.

Belongs to the AB hydrolase superfamily. Lipase family. Expressed in pollen grains and pollen tubes.

The protein resides in the lipid droplet. It is found in the membrane. The enzyme catalyses 1,2-di-(9Z-octadecenoyl)-glycerol + (9Z)-octadecenoate + H(+) = 1,2,3-tri-(9Z-octadecenoyl)-glycerol + H2O. The catalysed reaction is 1-(9Z-octadecenoyl)-glycerol + H2O = glycerol + (9Z)-octadecenoate + H(+). In terms of biological role, acid lipase that can hydrolyze a range of triacylglycerols without a clear preference for acyl-chains. Can also cleave 1,2-diacylglycerol, 1,3-diacylglycerol and 1-monoacylglycerol, but not phosphatidylcholine, phosphatidylethanolamine, or sterol esters. Required for pollen tube growth. Triacylglycerol hydrolysis by OBL1 may provide acyl groups for the synthesis of membrane lipids in growing pollen tubes. The chain is Triacylglycerol lipase OBL1 from Nicotiana tabacum (Common tobacco).